Reading from the N-terminus, the 272-residue chain is Orotidine 5'-phosphate decarboxylase (272 aa).

Lys-96 serves as the catalytic Proton donor.

The protein belongs to the OMP decarboxylase family. Type 2 subfamily.

The catalysed reaction is orotidine 5'-phosphate + H(+) = UMP + CO2. It participates in pyrimidine metabolism; UMP biosynthesis via de novo pathway; UMP from orotate: step 2/2. The polypeptide is Orotidine 5'-phosphate decarboxylase (Phocaeicola vulgatus (strain ATCC 8482 / DSM 1447 / JCM 5826 / CCUG 4940 / NBRC 14291 / NCTC 11154) (Bacteroides vulgatus)).